We begin with the raw amino-acid sequence, 488 residues long: Homoserine O-acetyltransferase (488 aa).

The AB hydrolase-1 domain occupies 47–355 (NAILVCHALT…SYGHDAFLLE (309 aa)). Residue serine 153 is the Nucleophile of the active site. Arginine 222 provides a ligand contact to substrate. Residues aspartate 316 and histidine 349 contribute to the active site. Aspartate 350 contributes to the substrate binding site. 2 consecutive CBS domains span residues 376-433 (MTEK…CSKL) and 437-488 (MTRD…RLIG).

Belongs to the AB hydrolase superfamily. MetX family. Homodimer.

Its subcellular location is the cytoplasm. It catalyses the reaction L-homoserine + acetyl-CoA = O-acetyl-L-homoserine + CoA. It functions in the pathway amino-acid biosynthesis; L-methionine biosynthesis via de novo pathway; O-acetyl-L-homoserine from L-homoserine: step 1/1. Its function is as follows. Transfers an acetyl group from acetyl-CoA to L-homoserine, forming acetyl-L-homoserine. This is Homoserine O-acetyltransferase from Methanococcoides burtonii (strain DSM 6242 / NBRC 107633 / OCM 468 / ACE-M).